The following is a 192-amino-acid chain: Fe/S biogenesis protein NfuA (192 aa).

[4Fe-4S] cluster-binding residues include Cys-149 and Cys-152.

Belongs to the NfuA family. As to quaternary structure, homodimer. It depends on [4Fe-4S] cluster as a cofactor.

Its function is as follows. Involved in iron-sulfur cluster biogenesis. Binds a 4Fe-4S cluster, can transfer this cluster to apoproteins, and thereby intervenes in the maturation of Fe/S proteins. Could also act as a scaffold/chaperone for damaged Fe/S proteins. This chain is Fe/S biogenesis protein NfuA, found in Pseudoalteromonas atlantica (strain T6c / ATCC BAA-1087).